The following is an 814-amino-acid chain: Coiled-coil and C2 domain-containing protein 1-like (814 aa).

The segment covering 1–11 (MFAKRKPEPAK) has biased composition (basic and acidic residues). Disordered stretches follow at residues 1–136 (MFAK…TFLP) and 157–263 (EANA…RSRQ). Residues 25-47 (IPDDFDPTSGYGDDDGGDSDLEA) show a composition bias toward acidic residues. Basic and acidic residues predominate over residues 73–85 (DLDKMIADSLRDV). 2 stretches are compositionally biased toward acidic residues: residues 86-100 (SDDD…DSDL) and 110-130 (LEEE…EEEP). Residues 143–201 (LGIIKQRLEIYKQAEANAKASGDSGKARRFGRGLKTLQDLHKQAAAGKTINVDDIPPEV) form a DM14 1 region. Positions 205–230 (PAGDPSPAADESPAPSTPVSQPTRVA) are enriched in low complexity. Positions 231-254 (PAPPTPTSPPAATPPPAPATPPNP) are enriched in pro residues. 2 DM14 regions span residues 256-314 (VAQM…PPPP) and 358-416 (LEAL…PVPP). Residues 351–378 (AAAAESMLEALQRRLEKYKSVEAAAKAE) are a coiled coil. Over residues 414–425 (VPPGFGPLPSTE) the composition is skewed to pro residues. Residues 414–486 (VPPGFGPLPS…LTTRVTGNHQ (73 aa)) form a disordered region. The segment covering 426-462 (PAPAATPSLPTSPTSPPATASTSAGGTPSGSSATTPT) has biased composition (low complexity). The span at 475–486 (TELTTRVTGNHQ) shows a compositional bias: polar residues. Residues 495-553 (MKLLLERQKEFKVAAIEAKKAGEIDQAKEYLKIYKGFDSLLNAASSGLPVDLSTLPVPP) are DM14 4. The C2 domain occupies 633–772 (RKGQPLPKFH…ETKCDIHDTY (140 aa)).

It belongs to the CC2D1 family. In terms of assembly, interacts (via DM14 domains 1 and 3) with shrb; the interaction is direct and blocks access to the surface involved in shrb polymerization. This interaction may be required for the ESCRT-III complex role in multivesicular body formation.

The protein resides in the cytoplasm. It is found in the cytosol. Its subcellular location is the apicolateral cell membrane. It localises to the cell cortex. The protein localises to the endosome. In terms of biological role, phosphatidyl inositol monophosphate binding protein involved in endosomal protein sorting through regulation of the endosomal sorting required for transport (ESCRT) pathway. Required for full activity of the ESCRT-III complex core component shrb/shrub, probably by preventing its inappropriate polymerisation. Required, but not essential, for the efficient generation of intraluminal vesicles (ILVs) in multivesicular bodies (MVBs). Involved in a late stage of the endosomal pathway targeting transmembrane proteins of the plasma membrane for lysosomal degradation. Plays a critical role in regulation of multiple signal transduction pathways, including the Notch and BMP/decapentaplegic (dpp) signaling pathways, through targeting of membrane bound receptors to multivesicular bodies, isolating them from the cytoplasm and targeting them for lysosomal degradation. Involved in targeting N/Notch for endosomal degradation, negatively regulating the Notch signaling pathway. Regulates Notch signaling in imaginal disk cells and follicle cells during oogenesis and multiple developmental processes, including development of wings, veins, legs, eyes and bristles. Restricts the activity of Notch to the dorsoventral (D/V) boundary of the wing imaginal disk. In external sensory organ development regulates Notch signaling during asymmetric cell division and differentiation of sensory organ precursor cells. May be involved in regulation of apoptosis and cell growth independent of Notch signaling. Involved in targeting tkv for endosomal degradation, negatively regulating the BMP/decapentaplegic (dpp) signaling pathway. Regulates the BMP/dpp signaling pathway in follicle cells during oogenesis, but not in imaginal disk cells during wing development. May be involved in differentiation or morphogenesis of peripodial epithelial cells in the developing imaginal disk. Involved in abscission of germline cells during oogenesis. The polypeptide is Coiled-coil and C2 domain-containing protein 1-like (Drosophila pseudoobscura pseudoobscura (Fruit fly)).